The following is a 351-amino-acid chain: Protein FAM118B (351 aa).

Ala-2 bears the N-acetylalanine mark. Ser-9 bears the Phosphoserine mark.

The protein belongs to the FAM118 family.

It is found in the nucleus. Its subcellular location is the cajal body. Functionally, may play a role in Cajal bodies formation. In Homo sapiens (Human), this protein is Protein FAM118B (FAM118B).